The following is a 354-amino-acid chain: Uroporphyrinogen decarboxylase (354 aa).

Substrate-binding positions include 25–29, aspartate 75, tyrosine 152, threonine 207, and histidine 330; that span reads RQAGR.

The protein belongs to the uroporphyrinogen decarboxylase family. In terms of assembly, homodimer.

The protein localises to the cytoplasm. It carries out the reaction uroporphyrinogen III + 4 H(+) = coproporphyrinogen III + 4 CO2. Its pathway is porphyrin-containing compound metabolism; protoporphyrin-IX biosynthesis; coproporphyrinogen-III from 5-aminolevulinate: step 4/4. Functionally, catalyzes the decarboxylation of four acetate groups of uroporphyrinogen-III to yield coproporphyrinogen-III. This Xanthomonas oryzae pv. oryzae (strain MAFF 311018) protein is Uroporphyrinogen decarboxylase.